Here is a 557-residue protein sequence, read N- to C-terminus: Dihydroxy-acid dehydratase (557 aa).

A [2Fe-2S] cluster-binding site is contributed by Cys-50. Asp-82 lines the Mg(2+) pocket. Cys-123 contributes to the [2Fe-2S] cluster binding site. 2 residues coordinate Mg(2+): Asp-124 and Lys-125. Lys-125 carries the post-translational modification N6-carboxylysine. Cys-195 lines the [2Fe-2S] cluster pocket. Residue Glu-447 coordinates Mg(2+). Ser-473 (proton acceptor) is an active-site residue.

It belongs to the IlvD/Edd family. As to quaternary structure, homodimer. The cofactor is [2Fe-2S] cluster. Mg(2+) is required as a cofactor.

It catalyses the reaction (2R)-2,3-dihydroxy-3-methylbutanoate = 3-methyl-2-oxobutanoate + H2O. It carries out the reaction (2R,3R)-2,3-dihydroxy-3-methylpentanoate = (S)-3-methyl-2-oxopentanoate + H2O. It participates in amino-acid biosynthesis; L-isoleucine biosynthesis; L-isoleucine from 2-oxobutanoate: step 3/4. The protein operates within amino-acid biosynthesis; L-valine biosynthesis; L-valine from pyruvate: step 3/4. Its function is as follows. Functions in the biosynthesis of branched-chain amino acids. Catalyzes the dehydration of (2R,3R)-2,3-dihydroxy-3-methylpentanoate (2,3-dihydroxy-3-methylvalerate) into 2-oxo-3-methylpentanoate (2-oxo-3-methylvalerate) and of (2R)-2,3-dihydroxy-3-methylbutanoate (2,3-dihydroxyisovalerate) into 2-oxo-3-methylbutanoate (2-oxoisovalerate), the penultimate precursor to L-isoleucine and L-valine, respectively. The chain is Dihydroxy-acid dehydratase from Nitrosomonas europaea (strain ATCC 19718 / CIP 103999 / KCTC 2705 / NBRC 14298).